We begin with the raw amino-acid sequence, 212 residues long: Peptide methionine sulfoxide reductase MsrA (212 aa).

Cys52 is a catalytic residue.

Belongs to the MsrA Met sulfoxide reductase family.

The enzyme catalyses L-methionyl-[protein] + [thioredoxin]-disulfide + H2O = L-methionyl-(S)-S-oxide-[protein] + [thioredoxin]-dithiol. It catalyses the reaction [thioredoxin]-disulfide + L-methionine + H2O = L-methionine (S)-S-oxide + [thioredoxin]-dithiol. In terms of biological role, has an important function as a repair enzyme for proteins that have been inactivated by oxidation. Catalyzes the reversible oxidation-reduction of methionine sulfoxide in proteins to methionine. This chain is Peptide methionine sulfoxide reductase MsrA, found in Cronobacter sakazakii (strain ATCC BAA-894) (Enterobacter sakazakii).